The chain runs to 411 residues: MTAQTPIHVYSEIGKLKKVLLHRPGKEIENLMPDYLERLLFDDIPFLEDAQKEHDAFAQALRDEGVEVLYLETLAAESLVTPEIREAFIDEYLSEANIRGRATKKAIRELLMSIEDNQELIEKTMAGVQKSELPEIPAAEKGLTDLVESSYPFAIDPMPNLYFTRDPFATIGTGVSLNHMFSETRNRETIYGKYIFTHHPIYGGGKVPMVYDRNETTRIEGGDELVLSKDVLAVGISQRTDAASIEKLLVNIFKQKLGFKKVLAFEFANNRKFMHLDTVFTMVDYDKFTIHPEIEGDLRVYSVTYENEELRIVEETGDLAELLAANLGVEHVELIRCGGDNLVAAGREQWNDGSNTLTIAPGVVVVYNRNTITNAILESKGLKLIKIHGSELVRGRGGPRCMSMPFEREDI.

Cys-401 acts as the Amidino-cysteine intermediate in catalysis.

It belongs to the arginine deiminase family.

The protein resides in the cytoplasm. It catalyses the reaction L-arginine + H2O = L-citrulline + NH4(+). It functions in the pathway amino-acid degradation; L-arginine degradation via ADI pathway; carbamoyl phosphate from L-arginine: step 1/2. The polypeptide is Arginine deiminase (Streptococcus equi subsp. zooepidemicus (strain H70)).